The following is a 140-amino-acid chain: Small ribosomal subunit protein bS6 (140 aa).

The disordered stretch occupies residues 111-140 (EHFTGPAGAEGSDDESTESTDEAVAETADA). Over residues 121 to 140 (GSDDESTESTDEAVAETADA) the composition is skewed to acidic residues.

This sequence belongs to the bacterial ribosomal protein bS6 family.

Its function is as follows. Binds together with bS18 to 16S ribosomal RNA. The protein is Small ribosomal subunit protein bS6 of Rhodopirellula baltica (strain DSM 10527 / NCIMB 13988 / SH1).